We begin with the raw amino-acid sequence, 255 residues long: Probable transcriptional regulatory protein Rcas_0718 (255 aa).

It belongs to the TACO1 family.

The protein localises to the cytoplasm. The sequence is that of Probable transcriptional regulatory protein Rcas_0718 from Roseiflexus castenholzii (strain DSM 13941 / HLO8).